A 142-amino-acid polypeptide reads, in one-letter code: MVLSAADKTNVKAAWSKVGGNSGAYMGEALYRTFLSFPPTKTYFPHFEFSAGSAQIKGQGQKIADAVSLAVAHMDDLATALSALSDLHAHNLKVDPVNFKFLCHNVLVTLASHLGKDFTPEIHASLDKFLALLSTVLTSKYR.

The region spanning 2-142 (VLSAADKTNV…LSTVLTSKYR (141 aa)) is the Globin domain. Ser4 is subject to Phosphoserine. N6-succinyllysine is present on Lys8. Thr9 carries the phosphothreonine modification. Lys12 is modified (N6-succinyllysine). Lys17 is subject to N6-acetyllysine; alternate. An N6-succinyllysine; alternate modification is found at Lys17. Position 25 is a phosphotyrosine (Tyr25). Ser36 carries the post-translational modification Phosphoserine. An N6-succinyllysine modification is found at Lys41. A Phosphoserine modification is found at Ser50. Gln59 lines the O2 pocket. His88 contacts heme b. Thr109 bears the Phosphothreonine mark. The residue at position 125 (Ser125) is a Phosphoserine. Residues Thr135 and Thr138 each carry the phosphothreonine modification. Position 139 is a phosphoserine (Ser139).

The protein belongs to the globin family. In terms of assembly, heterotetramer of two alpha chains and two beta chains. In terms of tissue distribution, red blood cells.

Functionally, involved in oxygen transport from the lung to the various peripheral tissues. In terms of biological role, hemopressin acts as an antagonist peptide of the cannabinoid receptor CNR1. Hemopressin-binding efficiently blocks cannabinoid receptor CNR1 and subsequent signaling. In Monodelphis domestica (Gray short-tailed opossum), this protein is Hemoglobin subunit alpha (HBA).